Reading from the N-terminus, the 369-residue chain is Zeaxanthin 7,8(7',8')-cleavage dioxygenase, chromoplastic (369 aa).

Fe cation-binding residues include H62, H112, H177, and H356.

The protein belongs to the carotenoid oxygenase family. Requires Fe(2+) as cofactor. As to expression, in the style branches.

The protein localises to the plastid. It is found in the chromoplast. It carries out the reaction all-trans-zeaxanthin + 2 O2 = crocetin dialdehyde + 2 3beta-hydroxy-beta-cyclocitral. Functionally, cleaves zeaxanthin symmetrically at the 7-8 and 7'-8' double bonds to produce crocetin dialdehyde and hydroxy-beta-cyclocitral, two water-soluble precursors sequestred in vacuoles and involved in the synthesis of saffron pigment and aroma. The chain is Zeaxanthin 7,8(7',8')-cleavage dioxygenase, chromoplastic (ZCD) from Crocus sativus (Saffron).